We begin with the raw amino-acid sequence, 126 residues long: Holo-[acyl-carrier-protein] synthase (126 aa).

Residues Asp-9 and Glu-58 each coordinate Mg(2+).

The protein belongs to the P-Pant transferase superfamily. AcpS family. It depends on Mg(2+) as a cofactor.

The protein localises to the cytoplasm. It carries out the reaction apo-[ACP] + CoA = holo-[ACP] + adenosine 3',5'-bisphosphate + H(+). In terms of biological role, transfers the 4'-phosphopantetheine moiety from coenzyme A to a Ser of acyl-carrier-protein. The sequence is that of Holo-[acyl-carrier-protein] synthase from Buchnera aphidicola subsp. Acyrthosiphon pisum (strain APS) (Acyrthosiphon pisum symbiotic bacterium).